Here is a 356-residue protein sequence, read N- to C-terminus: 4-hydroxybenzoate polyprenyltransferase, mitochondrial (356 aa).

The N-terminal 44 residues, 1–44 (MITRSIGIARRSNSINCIVGSNTSTSYSLDESTKRWISTSTKQP), are a transit peptide targeting the mitochondrion. 6 helical membrane passes run 71–91 (VDKP…IAMA), 93–113 (PAGQ…AFLM), 150–170 (AIGL…QLNW), 195–215 (WPQF…WCAL), 269–289 (WLSA…IASD), and 332–352 (IILF…QILI).

It belongs to the UbiA prenyltransferase family. It depends on Mg(2+) as a cofactor.

It localises to the mitochondrion inner membrane. The catalysed reaction is an all-trans-polyprenyl diphosphate + 4-hydroxybenzoate = a 4-hydroxy-3-(all-trans-polyprenyl)benzoate + diphosphate. It participates in cofactor biosynthesis; ubiquinone biosynthesis. In terms of biological role, catalyzes the prenylation of para-hydroxybenzoate (PHB) with an all-trans polyprenyl group. Mediates the second step in the final reaction sequence of coenzyme Q (CoQ) biosynthesis, which is the condensation of the polyisoprenoid side chain with PHB, generating the first membrane-bound Q intermediate. In Caenorhabditis elegans, this protein is 4-hydroxybenzoate polyprenyltransferase, mitochondrial (coq-2).